The following is a 179-amino-acid chain: Large ribosomal subunit protein uL6 (179 aa).

The protein belongs to the universal ribosomal protein uL6 family. In terms of assembly, part of the 50S ribosomal subunit.

Functionally, this protein binds to the 23S rRNA, and is important in its secondary structure. It is located near the subunit interface in the base of the L7/L12 stalk, and near the tRNA binding site of the peptidyltransferase center. The chain is Large ribosomal subunit protein uL6 from Beutenbergia cavernae (strain ATCC BAA-8 / DSM 12333 / CCUG 43141 / JCM 11478 / NBRC 16432 / NCIMB 13614 / HKI 0122).